A 361-amino-acid polypeptide reads, in one-letter code: Peptide chain release factor 1 (361 aa).

An N5-methylglutamine modification is found at Q235.

It belongs to the prokaryotic/mitochondrial release factor family. In terms of processing, methylated by PrmC. Methylation increases the termination efficiency of RF1.

It is found in the cytoplasm. In terms of biological role, peptide chain release factor 1 directs the termination of translation in response to the peptide chain termination codons UAG and UAA. The polypeptide is Peptide chain release factor 1 (Chlamydia felis (strain Fe/C-56) (Chlamydophila felis)).